The chain runs to 144 residues: Maximins 5/H4 type 3 (144 aa).

An N-terminal signal peptide occupies residues 1 to 18 (MNFKYIVAVSFLIASAYA). 2 propeptides span residues 19-43 (RSVQNDEQSLSQRDVLEEESLREIR) and 74-123 (TAED…KEKR). Residue L143 is modified to Leucine amide.

Belongs to the bombinin family. Expressed by the skin glands.

The protein resides in the secreted. In terms of biological role, maximin-5 shows antibacterial activity against both Gram-positive and Gram-negative bacteria. The only exception is the resistance of E.coli. Also shows antimicrobial activity against fungi C.albicans, A.flavus and P.uticale. It has little hemolytic activity. It does not possess a significant cytotoxicity against tumor cell lines. It does not possess a significant anti-HIV activity. Maximin-H4 shows antibacterial activity against both Gram-positive and Gram-negative bacteria. It also shows antimicrobial activity against the fungus C.albicans. Shows strong hemolytic activity. This Bombina maxima (Giant fire-bellied toad) protein is Maximins 5/H4 type 3.